We begin with the raw amino-acid sequence, 66 residues long: DNA-directed RNA polymerase subunit Rpo10 (66 aa).

Cys7, Cys10, Cys44, and Cys45 together coordinate Zn(2+).

This sequence belongs to the archaeal Rpo10/eukaryotic RPB10 RNA polymerase subunit family. In terms of assembly, part of the RNA polymerase complex. Requires Zn(2+) as cofactor.

The protein resides in the cytoplasm. The enzyme catalyses RNA(n) + a ribonucleoside 5'-triphosphate = RNA(n+1) + diphosphate. Functionally, DNA-dependent RNA polymerase (RNAP) catalyzes the transcription of DNA into RNA using the four ribonucleoside triphosphates as substrates. In Pyrobaculum aerophilum (strain ATCC 51768 / DSM 7523 / JCM 9630 / CIP 104966 / NBRC 100827 / IM2), this protein is DNA-directed RNA polymerase subunit Rpo10.